Consider the following 512-residue polypeptide: Maturase K (512 aa).

Belongs to the intron maturase 2 family. MatK subfamily.

The protein resides in the plastid. The protein localises to the chloroplast. Usually encoded in the trnK tRNA gene intron. Probably assists in splicing its own and other chloroplast group II introns. The protein is Maturase K of Koelreuteria paniculata (Goldenrain tree).